The primary structure comprises 93 residues: Small ribosomal subunit protein uS19 (93 aa).

The protein belongs to the universal ribosomal protein uS19 family.

In terms of biological role, protein S19 forms a complex with S13 that binds strongly to the 16S ribosomal RNA. The sequence is that of Small ribosomal subunit protein uS19 from Caldanaerobacter subterraneus subsp. tengcongensis (strain DSM 15242 / JCM 11007 / NBRC 100824 / MB4) (Thermoanaerobacter tengcongensis).